The primary structure comprises 348 residues: D-alanine--D-alanine ligase (348 aa).

Positions 132–334 constitute an ATP-grasp domain; the sequence is KRVLESADIP…YAELIEELVR (203 aa). Residue 162 to 217 participates in ATP binding; sequence EAVLSYPVFVKPANMGSSVGISKAESEEELRAAILLALTYDSRILIEQGVLAREIE. Residues D288, E301, and N303 each contribute to the Mg(2+) site.

Belongs to the D-alanine--D-alanine ligase family. Mg(2+) serves as cofactor. It depends on Mn(2+) as a cofactor.

Its subcellular location is the cytoplasm. It catalyses the reaction 2 D-alanine + ATP = D-alanyl-D-alanine + ADP + phosphate + H(+). It functions in the pathway cell wall biogenesis; peptidoglycan biosynthesis. Its function is as follows. Cell wall formation. The sequence is that of D-alanine--D-alanine ligase from Streptococcus equi subsp. zooepidemicus (strain MGCS10565).